Here is a 175-residue protein sequence, read N- to C-terminus: FOXL2 neighbor protein (175 aa).

2 disordered regions span residues 1 to 39 (MTRTPVGSARTRPKPRKLGPQRGKALQASSRLSESPALV) and 70 to 100 (AQKTGPGILQQRQKPPAPRASGGPALLGKRR).

The chain is FOXL2 neighbor protein (FOXL2NB) from Homo sapiens (Human).